The chain runs to 124 residues: Small ribosomal subunit protein uS13 (124 aa).

Residues 98-124 (VRGQRTKTNARTRKGPKRTIAGKKKAR) form a disordered region.

Belongs to the universal ribosomal protein uS13 family. As to quaternary structure, part of the 30S ribosomal subunit. Forms a loose heterodimer with protein S19. Forms two bridges to the 50S subunit in the 70S ribosome.

Its function is as follows. Located at the top of the head of the 30S subunit, it contacts several helices of the 16S rRNA. In the 70S ribosome it contacts the 23S rRNA (bridge B1a) and protein L5 of the 50S subunit (bridge B1b), connecting the 2 subunits; these bridges are implicated in subunit movement. Contacts the tRNAs in the A and P-sites. This chain is Small ribosomal subunit protein uS13, found in Mycobacterium leprae (strain Br4923).